Reading from the N-terminus, the 85-residue chain is ATP synthase subunit c (85 aa).

The next 2 helical transmembrane spans lie at 10 to 30 (GLAL…GAIG) and 65 to 85 (AVAE…LLVV).

It belongs to the ATPase C chain family. As to quaternary structure, F-type ATPases have 2 components, F(1) - the catalytic core - and F(0) - the membrane proton channel. F(1) has five subunits: alpha(3), beta(3), gamma(1), delta(1), epsilon(1). F(0) has three main subunits: a(1), b(2) and c(10-14). The alpha and beta chains form an alternating ring which encloses part of the gamma chain. F(1) is attached to F(0) by a central stalk formed by the gamma and epsilon chains, while a peripheral stalk is formed by the delta and b chains.

It localises to the cell inner membrane. Functionally, f(1)F(0) ATP synthase produces ATP from ADP in the presence of a proton or sodium gradient. F-type ATPases consist of two structural domains, F(1) containing the extramembraneous catalytic core and F(0) containing the membrane proton channel, linked together by a central stalk and a peripheral stalk. During catalysis, ATP synthesis in the catalytic domain of F(1) is coupled via a rotary mechanism of the central stalk subunits to proton translocation. In terms of biological role, key component of the F(0) channel; it plays a direct role in translocation across the membrane. A homomeric c-ring of between 10-14 subunits forms the central stalk rotor element with the F(1) delta and epsilon subunits. The sequence is that of ATP synthase subunit c from Thermotoga maritima (strain ATCC 43589 / DSM 3109 / JCM 10099 / NBRC 100826 / MSB8).